Reading from the N-terminus, the 190-residue chain is Protein shisa-like-2A (190 aa).

Helical transmembrane passes span S48 to L68 and V70 to I90.

This sequence belongs to the shisa family.

It is found in the membrane. The protein is Protein shisa-like-2A of Homo sapiens (Human).